A 392-amino-acid polypeptide reads, in one-letter code: Phosphopentomutase (392 aa).

Mn(2+)-binding residues include aspartate 15, aspartate 287, histidine 292, aspartate 328, histidine 329, and histidine 340.

The protein belongs to the phosphopentomutase family. Requires Mn(2+) as cofactor.

The protein localises to the cytoplasm. It carries out the reaction 2-deoxy-alpha-D-ribose 1-phosphate = 2-deoxy-D-ribose 5-phosphate. It catalyses the reaction alpha-D-ribose 1-phosphate = D-ribose 5-phosphate. The protein operates within carbohydrate degradation; 2-deoxy-D-ribose 1-phosphate degradation; D-glyceraldehyde 3-phosphate and acetaldehyde from 2-deoxy-alpha-D-ribose 1-phosphate: step 1/2. Functionally, isomerase that catalyzes the conversion of deoxy-ribose 1-phosphate (dRib-1-P) and ribose 1-phosphate (Rib-1-P) to deoxy-ribose 5-phosphate (dRib-5-P) and ribose 5-phosphate (Rib-5-P), respectively. This chain is Phosphopentomutase, found in Syntrophotalea carbinolica (strain DSM 2380 / NBRC 103641 / GraBd1) (Pelobacter carbinolicus).